Here is a 1210-residue protein sequence, read N- to C-terminus: Inner capsid protein VP3 (1210 aa).

The disordered stretch occupies residues 1–28 (MPRTSRNVRATEVATTAIPPSNAATDTT). Residues 113 to 136 (LRCQQCGAKFSSMTQLAEHVRTEH) form a C2H2-type zinc finger. The tract at residues 294-319 (PHAGPQVRSVQSQDQQVYSVDSGPDP) is disordered. Low complexity predominate over residues 299–315 (QVRSVQSQDQQVYSVDS).

Belongs to the turreted BTV-fold inner capsid family. Homodecamer; each decamer is made up of two conformers of VP2, called VP2A and VP2B. 12 homodecamers assemble to form an icosahedral capsid. Interacts with VP6.

It is found in the virion. Its function is as follows. Inner capsid protein that self-assembles to form an icosahedral capsid with a T=2 symmetry, which consists of 120 copies of VP2, with channels at each of its five-fold vertices. This capsid constitutes the innermost concentric layer of the viral mature particle. The chain is Inner capsid protein VP3 (S3) from Aquareovirus A (isolate Chum salmon/Japan/CSRV/1981) (AQRV-A).